Consider the following 164-residue polypeptide: Protein SprT (164 aa).

The 143-residue stretch at 14–156 (QQAETFFKRP…LCRRCREILV (143 aa)) folds into the SprT-like domain. Zn(2+) is bound at residue His69. Glu70 is a catalytic residue. His73 is a binding site for Zn(2+).

This sequence belongs to the SprT family. Zn(2+) serves as cofactor.

The protein resides in the cytoplasm. The sequence is that of Protein SprT from Pseudomonas entomophila (strain L48).